The sequence spans 73 residues: Putative defensin-like protein 277 (73 aa).

The signal sequence occupies residues 1-24; the sequence is MSAQKIYLASLLLFICLVFPQSTA. 4 cysteine pairs are disulfide-bonded: Cys27–Cys64, Cys33–Cys52, Cys39–Cys62, and Cys43–Cys63.

It belongs to the DEFL family.

The protein resides in the secreted. In Arabidopsis thaliana (Mouse-ear cress), this protein is Putative defensin-like protein 277.